We begin with the raw amino-acid sequence, 123 residues long: Ribonuclease P protein component (123 aa).

It belongs to the RnpA family. As to quaternary structure, consists of a catalytic RNA component (M1 or rnpB) and a protein subunit.

It catalyses the reaction Endonucleolytic cleavage of RNA, removing 5'-extranucleotides from tRNA precursor.. RNaseP catalyzes the removal of the 5'-leader sequence from pre-tRNA to produce the mature 5'-terminus. It can also cleave other RNA substrates such as 4.5S RNA. The protein component plays an auxiliary but essential role in vivo by binding to the 5'-leader sequence and broadening the substrate specificity of the ribozyme. In Streptomyces griseus subsp. griseus (strain JCM 4626 / CBS 651.72 / NBRC 13350 / KCC S-0626 / ISP 5235), this protein is Ribonuclease P protein component.